Consider the following 479-residue polypeptide: Sulfate adenylyltransferase subunit 1 (479 aa).

Residues 25–239 enclose the tr-type G domain; sequence KSLLRFLTCG…EVLETVDIQR (215 aa). Residues 34 to 41 form a G1 region; it reads GSVDDGKS. Residue 34–41 participates in GTP binding; sequence GSVDDGKS. The G2 stretch occupies residues 92–96; sequence GITID. The segment at 113–116 is G3; that stretch reads DTPG. GTP-binding positions include 113 to 117 and 168 to 171; these read DTPGH and NKMD. Residues 168–171 are G4; that stretch reads NKMD. The G5 stretch occupies residues 206-208; it reads SAL.

This sequence belongs to the TRAFAC class translation factor GTPase superfamily. Classic translation factor GTPase family. CysN/NodQ subfamily. As to quaternary structure, heterodimer composed of CysD, the smaller subunit, and CysN.

It catalyses the reaction sulfate + ATP + H(+) = adenosine 5'-phosphosulfate + diphosphate. It functions in the pathway sulfur metabolism; hydrogen sulfide biosynthesis; sulfite from sulfate: step 1/3. Its function is as follows. With CysD forms the ATP sulfurylase (ATPS) that catalyzes the adenylation of sulfate producing adenosine 5'-phosphosulfate (APS) and diphosphate, the first enzymatic step in sulfur assimilation pathway. APS synthesis involves the formation of a high-energy phosphoric-sulfuric acid anhydride bond driven by GTP hydrolysis by CysN coupled to ATP hydrolysis by CysD. This Salmonella choleraesuis (strain SC-B67) protein is Sulfate adenylyltransferase subunit 1.